The sequence spans 465 residues: Mothers against decapentaplegic homolog 5 (465 aa).

Positions Pro13–Pro137 constitute an MH1 domain. Zn(2+) is bound by residues Cys65, Cys110, Cys122, and His127. The disordered stretch occupies residues Asn163–Asp242. Polar residues predominate over residues Phe173–Thr183. A compositionally biased stretch (low complexity) spans Ala198 to Pro214. The MH2 domain occupies Trp271–Ser465.

The protein belongs to the dwarfin/SMAD family. May form trimers with the co-SMAD SMAD4.

The protein resides in the cytoplasm. It is found in the nucleus. Transcriptional modulator activated by BMP (bone morphogenetic proteins) type 1 receptor kinase. SMAD5 is a receptor-regulated SMAD (R-SMAD). This Gallus gallus (Chicken) protein is Mothers against decapentaplegic homolog 5 (SMAD5).